A 412-amino-acid polypeptide reads, in one-letter code: MSLNIAILTTGDELVNGEMSDTNTARIAQLLGSWGYIVRESRAIGDDEVEIETALKDMSGRRDVIISTGGLGPTDDDLTARIAARAFGRRLVLNEEALAQIRRFFAEKNKEMHPRNEKQALLPQKTVILPNRLGTAPGFHLCHEQCDMFFLPGVPREMVDMLKEQVLPRLHERSGGQAPRQERILKVFGLSEPKVEEHFSQAPLPEGVELAFGVEFPFVYVKLRACGDQAGALLDRAEMHTRKVLQPFVFAVGQETLAGNVARMLTDTGLTLALAESCTGGMISQMLTDIPGASRFLERGGVTYSNAAKQDWLQVSEDILNQEGAVSKACAQAMAQGIRQAAGTDLGLAITGIAGPDGGTPDKPVGTVFLALSTTGEERVQGYRFSGDREQIRHISACMALEWLRRYLGNLY.

Belongs to the CinA family.

The chain is CinA-like protein from Syntrophotalea carbinolica (strain DSM 2380 / NBRC 103641 / GraBd1) (Pelobacter carbinolicus).